A 447-amino-acid polypeptide reads, in one-letter code: tRNA-2-methylthio-N(6)-dimethylallyladenosine synthase (447 aa).

Residues 4–120 enclose the MTTase N-terminal domain; sequence RSFFIKTYGC…INELLERSRT (117 aa). Residues cysteine 13, cysteine 49, cysteine 83, cysteine 161, cysteine 165, and cysteine 168 each coordinate [4Fe-4S] cluster. Positions 147–382 constitute a Radical SAM core domain; the sequence is HEGEFRKFVT…QARQDEIGLE (236 aa). The region spanning 385 to 446 is the TRAM domain; sequence QEYIGTTQEV…QHSLRGSIVE (62 aa).

It belongs to the methylthiotransferase family. MiaB subfamily. In terms of assembly, monomer. [4Fe-4S] cluster serves as cofactor.

It is found in the cytoplasm. The catalysed reaction is N(6)-dimethylallyladenosine(37) in tRNA + (sulfur carrier)-SH + AH2 + 2 S-adenosyl-L-methionine = 2-methylsulfanyl-N(6)-dimethylallyladenosine(37) in tRNA + (sulfur carrier)-H + 5'-deoxyadenosine + L-methionine + A + S-adenosyl-L-homocysteine + 2 H(+). In terms of biological role, catalyzes the methylthiolation of N6-(dimethylallyl)adenosine (i(6)A), leading to the formation of 2-methylthio-N6-(dimethylallyl)adenosine (ms(2)i(6)A) at position 37 in tRNAs that read codons beginning with uridine. The polypeptide is tRNA-2-methylthio-N(6)-dimethylallyladenosine synthase (Desulfotalea psychrophila (strain LSv54 / DSM 12343)).